The following is a 557-amino-acid chain: Putative UDP-glucuronate:xylan alpha-glucuronosyltransferase 4 (557 aa).

Residues 11 to 31 traverse the membrane as a helical; Signal-anchor for type II membrane protein segment; sequence KIFMIYLILVSLSLLGLILPF. 2 residues coordinate Mn(2+): Asp365 and Asp367. Residues 365-367, 394-396, 421-425, and 466-471 each bind substrate; these read DAD, NSG, NGGDQ, and HYLGLK. His466 lines the Mn(2+) pocket.

The protein belongs to the glycosyltransferase 8 family. Glycogenin subfamily. Requires Mn(2+) as cofactor.

It is found in the golgi apparatus membrane. Its function is as follows. May be involved in the substitutions of the xylan backbone in stem glucuronoxylan. This chain is Putative UDP-glucuronate:xylan alpha-glucuronosyltransferase 4 (GUX4), found in Arabidopsis thaliana (Mouse-ear cress).